Here is a 141-residue protein sequence, read N- to C-terminus: Putative nickel-responsive regulator (141 aa).

His-80, His-91, His-93, and Cys-99 together coordinate Ni(2+).

This sequence belongs to the transcriptional regulatory CopG/NikR family. As to quaternary structure, homotetramer. It depends on Ni(2+) as a cofactor.

In terms of biological role, transcriptional regulator. The protein is Putative nickel-responsive regulator of Methanocaldococcus jannaschii (strain ATCC 43067 / DSM 2661 / JAL-1 / JCM 10045 / NBRC 100440) (Methanococcus jannaschii).